The chain runs to 194 residues: 7-methyl-GTP pyrophosphatase (194 aa).

Residue aspartate 70 is the Proton acceptor of the active site.

It belongs to the Maf family. YceF subfamily. It depends on a divalent metal cation as a cofactor.

It is found in the cytoplasm. It catalyses the reaction N(7)-methyl-GTP + H2O = N(7)-methyl-GMP + diphosphate + H(+). Nucleoside triphosphate pyrophosphatase that hydrolyzes 7-methyl-GTP (m(7)GTP). May have a dual role in cell division arrest and in preventing the incorporation of modified nucleotides into cellular nucleic acids. The chain is 7-methyl-GTP pyrophosphatase from Ralstonia nicotianae (strain ATCC BAA-1114 / GMI1000) (Ralstonia solanacearum).